The sequence spans 144 residues: Small ribosomal subunit protein eS12 (144 aa).

Belongs to the eukaryotic ribosomal protein eS12 family.

This is Small ribosomal subunit protein eS12 (RPS12) from Trypanosoma brucei brucei.